The following is a 330-amino-acid chain: MMWGAGSSMAWFSAGSGSVNVSSVDPVEEPTGPATLLPSPRAWDVVLCISGTLVSCENALVVAIIVGTPAFRAPMFLLVGSLAVADLLAGLGLVLHFAADFCIGSPEMSLMLVGVLAMAFTASIGSLLAITVDRYLSLYNALTYYSETTVTRTYVMLALVWVGALGLGLVPVLAWNCRDGLTTCGVVYPLSKNHLVVLAIAFFMVFGIMLQLYAQICRIVCRHAQQIALQRHLLPASHYVATRKGIATLAVVLGAFAACWLPFTVYCLLGDADSPRLYTYLTLLPATYNSMINPVIYAFRNQDVQKVLWAICCCCSTSKIPFRSRSPSDV.

At 1–42 (MMWGAGSSMAWFSAGSGSVNVSSVDPVEEPTGPATLLPSPRA) the chain is on the extracellular side. N-linked (GlcNAc...) asparagine glycosylation is present at Asn-20. A helical membrane pass occupies residues 43-62 (WDVVLCISGTLVSCENALVV). Residues 63-74 (AIIVGTPAFRAP) lie on the Cytoplasmic side of the membrane. Residues 75-98 (MFLLVGSLAVADLLAGLGLVLHFA) form a helical membrane-spanning segment. Residues 99 to 110 (ADFCIGSPEMSL) are Extracellular-facing. Residues 111-132 (MLVGVLAMAFTASIGSLLAITV) traverse the membrane as a helical segment. Residues 133 to 153 (DRYLSLYNALTYYSETTVTRT) lie on the Cytoplasmic side of the membrane. A helical transmembrane segment spans residues 154–173 (YVMLALVWVGALGLGLVPVL). Residues 174 to 198 (AWNCRDGLTTCGVVYPLSKNHLVVL) lie on the Extracellular side of the membrane. The chain crosses the membrane as a helical span at residues 199 to 217 (AIAFFMVFGIMLQLYAQIC). At 218–245 (RIVCRHAQQIALQRHLLPASHYVATRKG) the chain is on the cytoplasmic side. The helical transmembrane segment at 246 to 272 (IATLAVVLGAFAACWLPFTVYCLLGDA) threads the bilayer. At 273-277 (DSPRL) the chain is on the extracellular side. A helical membrane pass occupies residues 278–299 (YTYLTLLPATYNSMINPVIYAF). Residues 300-330 (RNQDVQKVLWAICCCCSTSKIPFRSRSPSDV) are Cytoplasmic-facing. A lipid anchor (S-palmitoyl cysteine) is attached at Cys-313. Phosphoserine occurs at positions 324, 326, and 328.

The protein belongs to the G-protein coupled receptor 1 family. Expressed in both the forebrain and hindbrain, with the highest level in habenula. Lower level expression in the testis. Expressed in several metabolically active peripheral tissues, although at lower levels than in the central nervous system (CNS).

It is found in the cell membrane. In terms of biological role, constitutively active G-protein coupled receptor that maintains high 3'-5'-cyclic adenosine monophosphate (cAMP) levels that a plays a role in serveral processes including meiotic arrest in oocytes or neuronal development via activation of numerous intracellular signaling pathways. Acts as an essential activator of thermogenic adipocytes and drives thermogenesis via its intrinsic G(s)-coupling activity without the requirement of a ligand. Has a potential role in modulating a number of brain functions, including behavioral responses to stress, amyloid-beta peptide generation in neurons. Stimulates neurite outgrowth in cerebellar granular neurons modulated via PKA, ERK, and most strongly PI3K-mediated signaling pathways. The protein is G-protein coupled receptor 3 (Gpr3) of Mus musculus (Mouse).